A 285-amino-acid polypeptide reads, in one-letter code: Golgi phosphoprotein 3-like (285 aa).

The disordered stretch occupies residues 1 to 43 (MTTLTHRTRRTEVSKSSEKKIESEEDTNQERSPDNEDPGDSKD). Residues 10 to 43 (RTEVSKSSEKKIESEEDTNQERSPDNEDPGDSKD) are compositionally biased toward basic and acidic residues. W67 and R76 together coordinate a 1,2-diacyl-sn-glycero-3-phospho-(1D-myo-inositol 4-phosphate). Position 112 is a phosphoserine (S112). Residues R157 and R160 each contribute to the a 1,2-diacyl-sn-glycero-3-phospho-(1D-myo-inositol 4-phosphate) site. The interval 176 to 187 (EKQNFLLFDMTT) is beta-hairpin required for oligomerization.

This sequence belongs to the GOLPH3/VPS74 family. As to quaternary structure, homooligomer. Does not interact MYO18; differs from GOLPH3 by its inability to interact with MYO18. May interact with ARF1. In terms of tissue distribution, expressed in a subset of tissues tested with higher expression in salivary gland, small intestine and skin (at protein level).

The protein localises to the golgi apparatus. The protein resides in the golgi stack membrane. It is found in the trans-Golgi network membrane. Functionally, phosphatidylinositol-4-phosphate-binding protein that may antagonize the action of GOLPH3 which is required for the process of vesicle budding at the Golgi and anterograde transport to the plasma membrane. The protein is Golgi phosphoprotein 3-like (Golph3l) of Mus musculus (Mouse).